Here is a 443-residue protein sequence, read N- to C-terminus: UDP-N-acetylmuramate--L-alanine ligase (443 aa).

111–117 (GAHGKTS) is an ATP binding site.

The protein belongs to the MurCDEF family.

Its subcellular location is the cytoplasm. It carries out the reaction UDP-N-acetyl-alpha-D-muramate + L-alanine + ATP = UDP-N-acetyl-alpha-D-muramoyl-L-alanine + ADP + phosphate + H(+). Its pathway is cell wall biogenesis; peptidoglycan biosynthesis. Functionally, cell wall formation. The protein is UDP-N-acetylmuramate--L-alanine ligase of Levilactobacillus brevis (strain ATCC 367 / BCRC 12310 / CIP 105137 / JCM 1170 / LMG 11437 / NCIMB 947 / NCTC 947) (Lactobacillus brevis).